Here is a 274-residue protein sequence, read N- to C-terminus: MAIHLYKTSTPSTRNGAVDSQVKSNTRNNLIYGQHRCSKGRNARGIITAGHRGGGHKRLYRKIDFRRNEKDIYGRIVSIEYDPNRNASICLIHYGDGEKRYILHPRGAIIGDTIVSGTEVPIKMGNALPLTDMPLGTAIHNIEITLGKGGQLARAAGAVAKLIAKEGKSATLKLPSGEVRLISKNCSATVGQVGNVEVNQKKLGRAGSKCWLGKRPVVRGVVMNPVDHPHGGGEGRAPIGRKKPATPWGYPALGRRSRKRKKYSDNLILRRRSK.

2 disordered regions span residues 1–20 (MAIH…AVDS) and 223–274 (MNPV…RRSK).

Belongs to the universal ribosomal protein uL2 family. In terms of assembly, part of the 50S ribosomal subunit.

The protein localises to the plastid. Its subcellular location is the chloroplast. The polypeptide is Large ribosomal subunit protein uL2cz/uL2cy (rpl2-A) (Eucalyptus globulus subsp. globulus (Tasmanian blue gum)).